Here is a 514-residue protein sequence, read N- to C-terminus: Probable cytochrome P450 6w1 (514 aa).

Cys450 contacts heme.

The protein belongs to the cytochrome P450 family. It depends on heme as a cofactor.

The protein localises to the endoplasmic reticulum membrane. The protein resides in the microsome membrane. May be involved in the metabolism of insect hormones and in the breakdown of synthetic insecticides. This is Probable cytochrome P450 6w1 (Cyp6w1) from Drosophila melanogaster (Fruit fly).